A 488-amino-acid polypeptide reads, in one-letter code: N-succinylglutamate 5-semialdehyde dehydrogenase (488 aa).

221–226 (GSSRTG) contributes to the NAD(+) binding site. Active-site residues include Glu-244 and Cys-278.

It belongs to the aldehyde dehydrogenase family. AstD subfamily.

The catalysed reaction is N-succinyl-L-glutamate 5-semialdehyde + NAD(+) + H2O = N-succinyl-L-glutamate + NADH + 2 H(+). It functions in the pathway amino-acid degradation; L-arginine degradation via AST pathway; L-glutamate and succinate from L-arginine: step 4/5. Its function is as follows. Catalyzes the NAD-dependent reduction of succinylglutamate semialdehyde into succinylglutamate. The polypeptide is N-succinylglutamate 5-semialdehyde dehydrogenase (Pseudomonas syringae pv. tomato (strain ATCC BAA-871 / DC3000)).